The sequence spans 540 residues: Maintenance of mitochondrial morphology protein 1 (540 aa).

The Lumenal portion of the chain corresponds to 1–25 (MAGPSNQTQPPPPVLTQPSLSFTQG). The helical transmembrane segment at 26-46 (LLVGQLSVVLLIGAFIKFFIF) threads the bilayer. The Cytoplasmic segment spans residues 47–540 (GEAPPHPSRN…GSMPDPVVVT (494 aa)). Disordered stretches follow at residues 52 to 135 (HPSR…SHQP), 275 to 331 (GPGT…ATAA), 416 to 471 (GRTG…GGSM), and 509 to 540 (YGGA…VVVT). 3 stretches are compositionally biased toward polar residues: residues 69–81 (YSLN…SSPR), 88–105 (STSN…NTRS), and 112–121 (YSATPTNPTS). Residues 122–132 (KHSRSRPHHSS) show a composition bias toward basic residues. Residues 134–409 (QPESLDWFNV…EPRVQVVGLP (276 aa)) form the SMP-LTD domain. Over residues 321-331 (TNTNTAGATAA) the composition is skewed to low complexity. Gly residues-rich tracts occupy residues 442–471 (TAGG…GGSM) and 511–521 (GAQGGGGGGGR).

The protein belongs to the MMM1 family. Homodimer. Component of the ER-mitochondria encounter structure (ERMES) or MDM complex, composed of MMM1, MDM10, MDM12 and MDM34. An MMM1 homodimer associates with one molecule of MDM12 on each side in a pairwise head-to-tail manner, and the SMP-LTD domains of MMM1 and MDM12 generate a continuous hydrophobic tunnel for phospholipid trafficking.

The protein localises to the endoplasmic reticulum membrane. Component of the ERMES/MDM complex, which serves as a molecular tether to connect the endoplasmic reticulum (ER) and mitochondria. Components of this complex are involved in the control of mitochondrial shape and protein biogenesis, and function in nonvesicular lipid trafficking between the ER and mitochondria. The MDM12-MMM1 subcomplex functions in the major beta-barrel assembly pathway that is responsible for biogenesis of all outer membrane beta-barrel proteins, and acts in a late step after the SAM complex. The MDM10-MDM12-MMM1 subcomplex further acts in the TOM40-specific pathway after the action of the MDM12-MMM1 complex. Essential for establishing and maintaining the structure of mitochondria and maintenance of mtDNA nucleoids. The sequence is that of Maintenance of mitochondrial morphology protein 1 from Blastomyces gilchristii (strain SLH14081) (Blastomyces dermatitidis).